Here is a 246-residue protein sequence, read N- to C-terminus: Ribonuclease 3 (246 aa).

Positions 18–147 constitute an RNase III domain; the sequence is FQELQNKIGI…FIGALYLDQG (130 aa). Position 60 (Glu60) interacts with Mg(2+). Residue Asp64 is part of the active site. Mg(2+)-binding residues include Asp133 and Glu136. Glu136 is an active-site residue. A DRBM domain is found at 173 to 242; it reads DFKSQLQELV…AQMALETLRA (70 aa).

The protein belongs to the ribonuclease III family. As to quaternary structure, homodimer. Mg(2+) serves as cofactor.

The protein localises to the cytoplasm. The enzyme catalyses Endonucleolytic cleavage to 5'-phosphomonoester.. Digests double-stranded RNA. Involved in the processing of primary rRNA transcript to yield the immediate precursors to the large and small rRNAs (23S and 16S). Processes some mRNAs, and tRNAs when they are encoded in the rRNA operon. Processes pre-crRNA and tracrRNA of type II CRISPR loci if present in the organism. This chain is Ribonuclease 3, found in Geobacillus kaustophilus (strain HTA426).